A 572-amino-acid chain; its full sequence is NADP-dependent malic enzyme (572 aa).

M1 is modified (N-acetylmethionine). Y102 serves as the catalytic Proton donor. R155 contributes to the NADP(+) binding site. K173 serves as the catalytic Proton acceptor. The a divalent metal cation site is built by E245, D246, and D269. NADP(+) is bound by residues D269 and G301–E318. S336 carries the post-translational modification Phosphoserine.

Belongs to the malic enzymes family. As to quaternary structure, homotetramer. Mg(2+) serves as cofactor. It depends on Mn(2+) as a cofactor.

The protein localises to the cytoplasm. The catalysed reaction is (S)-malate + NADP(+) = pyruvate + CO2 + NADPH. The enzyme catalyses oxaloacetate + H(+) = pyruvate + CO2. In terms of biological role, catalyzes the oxidative decarboxylation of (S)-malate in the presence of NADP(+) and divalent metal ions, and decarboxylation of oxaloacetate. The protein is NADP-dependent malic enzyme (Me1) of Mus musculus (Mouse).